The sequence spans 153 residues: Large ribosomal subunit protein uL13 (153 aa).

It belongs to the universal ribosomal protein uL13 family. In terms of assembly, part of the 50S ribosomal subunit.

Its function is as follows. This protein is one of the early assembly proteins of the 50S ribosomal subunit, although it is not seen to bind rRNA by itself. It is important during the early stages of 50S assembly. The protein is Large ribosomal subunit protein uL13 of Chelativorans sp. (strain BNC1).